An 872-amino-acid chain; its full sequence is Cellulose synthase catalytic subunit [UDP-forming] (872 aa).

4 helical membrane passes run 30 to 50 (SAFSATLGCFWMILAWIFIPL), 151 to 171 (ILGIIVTFSLILALICVTQPF), 173 to 193 (PLAQFIFLMLLWGGALIVRRM), and 230 to 250 (LVCGLILLFAETYAWIVLVLG). Residues 271-364 (LWPSVDIFVP…FVSIFDCDHV (94 aa)) are catalytic subdomain A. Residue Asp-313 is part of the active site. Asp-360 and Asp-362 together coordinate substrate. The tract at residues 441 to 501 (KPLDEIGGIA…GQRIRWARGM (61 aa)) is catalytic subdomain B. Residue Asp-457 is part of the active site. A run of 5 helical transmembrane segments spans residues 525 to 545 (VNAMFHFLSGIPRLIFLTAPL), 547 to 567 (FLLLHAYIIYAPALMIALFVL), 592 to 612 (IYETVLAWYIAPPTLVALINP), 640 to 660 (IFLVLLNLVGVAVGIWRYFYG), and 668 to 688 (VVVSMVWVFYNLIVLGGAVAV). The 97-residue stretch at 694-790 (QVRRSHRVEM…QHIDFVQCTF (97 aa)) folds into the PilZ domain. The chain crosses the membrane as a helical span at residues 833-853 (SVKGIFRVLTSLVSWVVSFIP).

This sequence belongs to the glycosyltransferase 2 family. The cofactor is Mg(2+).

It localises to the cell inner membrane. It catalyses the reaction [(1-&gt;4)-beta-D-glucosyl](n) + UDP-alpha-D-glucose = [(1-&gt;4)-beta-D-glucosyl](n+1) + UDP + H(+). It functions in the pathway glycan metabolism; bacterial cellulose biosynthesis. Activated by bis-(3'-5') cyclic diguanylic acid (c-di-GMP). Its function is as follows. Catalytic subunit of cellulose synthase. It polymerizes uridine 5'-diphosphate glucose to cellulose, which is produced as an extracellular component for mechanical and chemical protection at the onset of the stationary phase, when the cells exhibit multicellular behavior (rdar morphotype). Coexpression of cellulose and thin aggregative fimbriae leads to a hydrophobic network with tightly packed cells embedded in a highly inert matrix. The chain is Cellulose synthase catalytic subunit [UDP-forming] (bcsA) from Escherichia coli O157:H7.